Consider the following 536-residue polypeptide: Methyl-accepting chemotaxis aspartate transducer (536 aa).

The Cytoplasmic segment spans residues Met1 to Ser10. The chain crosses the membrane as a helical span at residues Leu11–Val31. Topologically, residues Ala32–Ser188 are periplasmic. The segment at Arg64 to Arg73 is the 3 Arg may form a positively charged pocket, which binds the alpha-carboxyl group of the attractant AA. A helical membrane pass occupies residues Ile189 to Trp209. Residues Leu210–Ala536 lie on the Cytoplasmic side of the membrane. The HAMP domain occupies Thr212–Gly264. One can recognise a Methyl-accepting transducer domain in the interval Gly269–Glu498. Gln293 carries the glutamate methyl ester (Gln) modification. Position 300 is a glutamate methyl ester (Glu) (Glu300). Glutamate methyl ester (Gln) is present on Gln307. Glu489 and Glu498 each carry glutamate methyl ester (Glu).

This sequence belongs to the methyl-accepting chemotaxis (MCP) protein family.

Its subcellular location is the cell inner membrane. Its function is as follows. This protein responds to changes in Asp concentration in the environment, transduces a signal from the outside to the inside of the cell, and facilitates sensory adaptation through various levels of methylation. In terms of biological role, chemotactic-signal transducers respond to changes in the concentration of attractants and repellents in the environment, transduce a signal from the outside to the inside of the cell, and facilitate sensory adaptation through the variation of the level of methylation. Attractants increase the level of methylation while repellents decrease the level of methylation, the methyl groups are added by the methyltransferase CheR and removed by the methylesterase CheB. The chain is Methyl-accepting chemotaxis aspartate transducer (tas) from Klebsiella aerogenes (strain ATCC 13048 / DSM 30053 / CCUG 1429 / JCM 1235 / KCTC 2190 / NBRC 13534 / NCIMB 10102 / NCTC 10006 / CDC 819-56) (Enterobacter aerogenes).